Reading from the N-terminus, the 400-residue chain is Formate-dependent phosphoribosylglycinamide formyltransferase (400 aa).

N(1)-(5-phospho-beta-D-ribosyl)glycinamide-binding positions include 22 to 23 (EL) and Glu82. ATP contacts are provided by residues Arg115, Lys157, 162–167 (SSGKGQ), 197–200 (EGFI), and Glu205. One can recognise an ATP-grasp domain in the interval 120–315 (RLAAETLGVP…EFELHARAIL (196 aa)). Glu274 and Glu286 together coordinate Mg(2+). N(1)-(5-phospho-beta-D-ribosyl)glycinamide is bound by residues Asp293, Lys362, and 369 to 370 (RR).

Belongs to the PurK/PurT family. Homodimer.

It catalyses the reaction N(1)-(5-phospho-beta-D-ribosyl)glycinamide + formate + ATP = N(2)-formyl-N(1)-(5-phospho-beta-D-ribosyl)glycinamide + ADP + phosphate + H(+). It participates in purine metabolism; IMP biosynthesis via de novo pathway; N(2)-formyl-N(1)-(5-phospho-D-ribosyl)glycinamide from N(1)-(5-phospho-D-ribosyl)glycinamide (formate route): step 1/1. Involved in the de novo purine biosynthesis. Catalyzes the transfer of formate to 5-phospho-ribosyl-glycinamide (GAR), producing 5-phospho-ribosyl-N-formylglycinamide (FGAR). Formate is provided by PurU via hydrolysis of 10-formyl-tetrahydrofolate. The polypeptide is Formate-dependent phosphoribosylglycinamide formyltransferase (Variovorax paradoxus (strain S110)).